The primary structure comprises 240 residues: Adenosylcobinamide-GDP ribazoletransferase (240 aa).

5 helical membrane-spanning segments follow: residues 31 to 51 (LLYY…ASHL), 62 to 81 (ALLL…DGLA), 109 to 129 (IAVV…WVLV), 133 to 153 (IGAQ…GLFL), and 179 to 199 (VLLV…LLAL).

It belongs to the CobS family. The cofactor is Mg(2+).

It is found in the cell inner membrane. The enzyme catalyses alpha-ribazole + adenosylcob(III)inamide-GDP = adenosylcob(III)alamin + GMP + H(+). It carries out the reaction alpha-ribazole 5'-phosphate + adenosylcob(III)inamide-GDP = adenosylcob(III)alamin 5'-phosphate + GMP + H(+). Its pathway is cofactor biosynthesis; adenosylcobalamin biosynthesis; adenosylcobalamin from cob(II)yrinate a,c-diamide: step 7/7. Functionally, joins adenosylcobinamide-GDP and alpha-ribazole to generate adenosylcobalamin (Ado-cobalamin). Also synthesizes adenosylcobalamin 5'-phosphate from adenosylcobinamide-GDP and alpha-ribazole 5'-phosphate. The polypeptide is Adenosylcobinamide-GDP ribazoletransferase (Pseudomonas putida (strain ATCC 700007 / DSM 6899 / JCM 31910 / BCRC 17059 / LMG 24140 / F1)).